The chain runs to 136 residues: Large ribosomal subunit protein uL16 (136 aa).

The protein belongs to the universal ribosomal protein uL16 family. As to quaternary structure, part of the 50S ribosomal subunit.

Its function is as follows. Binds 23S rRNA and is also seen to make contacts with the A and possibly P site tRNAs. The protein is Large ribosomal subunit protein uL16 of Rickettsia massiliae (strain Mtu5).